A 380-amino-acid chain; its full sequence is Anhydro-N-acetylmuramic acid kinase (380 aa).

9 to 16 (GTSADGVD) is a binding site for ATP.

The protein belongs to the anhydro-N-acetylmuramic acid kinase family.

It carries out the reaction 1,6-anhydro-N-acetyl-beta-muramate + ATP + H2O = N-acetyl-D-muramate 6-phosphate + ADP + H(+). It functions in the pathway amino-sugar metabolism; 1,6-anhydro-N-acetylmuramate degradation. Its pathway is cell wall biogenesis; peptidoglycan recycling. Catalyzes the specific phosphorylation of 1,6-anhydro-N-acetylmuramic acid (anhMurNAc) with the simultaneous cleavage of the 1,6-anhydro ring, generating MurNAc-6-P. Is required for the utilization of anhMurNAc either imported from the medium or derived from its own cell wall murein, and thus plays a role in cell wall recycling. This chain is Anhydro-N-acetylmuramic acid kinase, found in Synechococcus sp. (strain CC9902).